Here is a 426-residue protein sequence, read N- to C-terminus: Serine/threonine-protein kinase ssn3 (426 aa).

One can recognise a Protein kinase domain in the interval 41–368 (YHIVGFISSG…AREALEHPYF (328 aa)). Residues 47 to 55 (ISSGTYGRV) and Lys-71 each bind ATP. Asp-173 acts as the Proton acceptor in catalysis. The interval 390 to 426 (RVTQDDNDIRSGSLPGTKRSGLPDDSLMGRAAKRLKE) is disordered.

This sequence belongs to the protein kinase superfamily. CMGC Ser/Thr protein kinase family. CDC2/CDKX subfamily. As to quaternary structure, component of the srb8-11 complex, a regulatory module of the Mediator complex. Mg(2+) is required as a cofactor.

The protein localises to the nucleus. It catalyses the reaction L-seryl-[protein] + ATP = O-phospho-L-seryl-[protein] + ADP + H(+). The enzyme catalyses L-threonyl-[protein] + ATP = O-phospho-L-threonyl-[protein] + ADP + H(+). The catalysed reaction is [DNA-directed RNA polymerase] + ATP = phospho-[DNA-directed RNA polymerase] + ADP + H(+). Functionally, component of the srb8-11 complex. The srb8-11 complex is a regulatory module of the Mediator complex which is itself involved in regulation of basal and activated RNA polymerase II-dependent transcription. The srb8-11 complex may be involved in the transcriptional repression of a subset of genes regulated by Mediator. It may inhibit the association of the Mediator complex with RNA polymerase II to form the holoenzyme complex. The srb8-11 complex phosphorylates the C-terminal domain (CTD) of the largest subunit of RNA polymerase II. This Aspergillus fumigatus (strain ATCC MYA-4609 / CBS 101355 / FGSC A1100 / Af293) (Neosartorya fumigata) protein is Serine/threonine-protein kinase ssn3 (ssn3).